Here is a 396-residue protein sequence, read N- to C-terminus: L-lactate dehydrogenase (396 aa).

Positions 1–380 (MIISAASDYR…TQDSLVQGLG (380 aa)) constitute an FMN hydroxy acid dehydrogenase domain. A substrate-binding site is contributed by tyrosine 24. 2 residues coordinate FMN: serine 106 and glutamine 127. Tyrosine 129 contributes to the substrate binding site. Position 155 (threonine 155) interacts with FMN. Arginine 164 lines the substrate pocket. FMN is bound at residue lysine 251. Catalysis depends on histidine 275, which acts as the Proton acceptor. Arginine 278 lines the substrate pocket. Position 306–330 (306–330 (DSGIRNGLDVVRMIALGADTVLLGR)) interacts with FMN.

The protein belongs to the FMN-dependent alpha-hydroxy acid dehydrogenase family. The cofactor is FMN.

It is found in the cell inner membrane. It catalyses the reaction (S)-lactate + A = pyruvate + AH2. In terms of biological role, catalyzes the conversion of L-lactate to pyruvate. Is coupled to the respiratory chain. This chain is L-lactate dehydrogenase, found in Shigella flexneri serotype 5b (strain 8401).